The sequence spans 187 residues: MKYLIVGLGNIGPEYHETRHNIGFMVLDALARANNLSFTDGRYGFTTTLSVKGRQMILLKPSTFMNLSGNAVRYWMQKENIPLENVLIIVDDLALPFGTLRLKSKGSDAGHNGLKHIATILGTQNYARLRFGIGNDFPRGGQIDFVLGHFTDEDWKTMDERLETAGEIAKSFCLAGIDITMNQFNKK.

Residue tyrosine 15 participates in tRNA binding. Histidine 20 serves as the catalytic Proton acceptor. TRNA-binding residues include phenylalanine 64, asparagine 66, and asparagine 112.

The protein belongs to the PTH family. In terms of assembly, monomer.

The protein localises to the cytoplasm. The catalysed reaction is an N-acyl-L-alpha-aminoacyl-tRNA + H2O = an N-acyl-L-amino acid + a tRNA + H(+). Its function is as follows. Hydrolyzes ribosome-free peptidyl-tRNAs (with 1 or more amino acids incorporated), which drop off the ribosome during protein synthesis, or as a result of ribosome stalling. Functionally, catalyzes the release of premature peptidyl moieties from peptidyl-tRNA molecules trapped in stalled 50S ribosomal subunits, and thus maintains levels of free tRNAs and 50S ribosomes. The polypeptide is Peptidyl-tRNA hydrolase (Bacteroides fragilis (strain ATCC 25285 / DSM 2151 / CCUG 4856 / JCM 11019 / LMG 10263 / NCTC 9343 / Onslow / VPI 2553 / EN-2)).